A 239-amino-acid polypeptide reads, in one-letter code: Probable replication-associated protein repA2 (239 aa).

This sequence belongs to the IncFII RepA family.

Functionally, this protein is essential for plasmid replication; it is involved in copy control functions. The polypeptide is Probable replication-associated protein repA2 (repA2) (Buchnera aphidicola subsp. Baizongia pistaciae (strain Bp)).